A 271-amino-acid polypeptide reads, in one-letter code: Oxidation resistance protein 1 (271 aa).

Residues 15-41 form a disordered region; it reads WSNSEESDRDPRHLKSSDDLSNYTGSR. Positions 23–32 are enriched in basic and acidic residues; sequence RDPRHLKSSD. The 209-residue stretch at 63-271 folds into the TLDc domain; it reads RLLHPEMCDE…IMGLEVWRVG (209 aa).

Belongs to the OXR1 family.

The protein localises to the mitochondrion. May be involved in protection from oxidative damage. This chain is Oxidation resistance protein 1 (OXR1), found in Candida glabrata (strain ATCC 2001 / BCRC 20586 / JCM 3761 / NBRC 0622 / NRRL Y-65 / CBS 138) (Yeast).